A 489-amino-acid chain; its full sequence is Toxin coregulated pilus biosynthesis outer membrane protein C (489 aa).

The signal sequence occupies residues 1–16 (MKKTIISTLVIGLVSG). A lipid anchor (N-palmitoyl cysteine) is attached at Cys-17. Residue Cys-17 is the site of S-diacylglycerol cysteine attachment. Transmembrane regions (helical) follow at residues 174-190 (FSSS…SSGL), 294-308 (AISL…GASY), 402-417 (QLVS…LPTV), and 442-457 (NYIQ…GGGT).

The protein resides in the cell membrane. In terms of biological role, involved in TCP pilus biogenesis. This Vibrio cholerae serotype O1 (strain ATCC 39315 / El Tor Inaba N16961) protein is Toxin coregulated pilus biosynthesis outer membrane protein C (tcpC).